The following is a 692-amino-acid chain: Potassium-transporting ATPase ATP-binding subunit (692 aa).

4 helical membrane-spanning segments follow: residues 50–70 (PIMF…FLPS), 74–94 (SIPG…VLFA), 240–260 (LTLI…YLGF), and 266–286 (VLVA…LSAI). Residue D319 is the 4-aspartylphosphate intermediate of the active site. Residues D356, E360, 388–395 (FKAETRMS), and K407 each bind ATP. Mg(2+) contacts are provided by D530 and D534. The next 3 helical transmembrane spans lie at 600–620 (FAII…LNIM), 628–648 (AILS…PLAM), and 672–692 (GGVI…GLFI).

This sequence belongs to the cation transport ATPase (P-type) (TC 3.A.3) family. Type IA subfamily. As to quaternary structure, the system is composed of three essential subunits: KdpA, KdpB and KdpC.

It is found in the cell membrane. It catalyses the reaction K(+)(out) + ATP + H2O = K(+)(in) + ADP + phosphate + H(+). In terms of biological role, part of the high-affinity ATP-driven potassium transport (or Kdp) system, which catalyzes the hydrolysis of ATP coupled with the electrogenic transport of potassium into the cytoplasm. This subunit is responsible for energy coupling to the transport system and for the release of the potassium ions to the cytoplasm. In Bacillus thuringiensis (strain Al Hakam), this protein is Potassium-transporting ATPase ATP-binding subunit.